The sequence spans 420 residues: 3-oxo-tetronate kinase (420 aa).

Residues Ser258, 360-363, and Gly403 contribute to the ATP site; that span reads GGET.

This sequence belongs to the four-carbon acid sugar kinase family.

The catalysed reaction is 3-dehydro-L-erythronate + ATP = 3-dehydro-4-O-phospho-L-erythronate + ADP + H(+). It catalyses the reaction 3-dehydro-D-erythronate + ATP = 3-dehydro-4-O-phospho-D-erythronate + ADP + H(+). Its function is as follows. Catalyzes the ATP-dependent phosphorylation of 3-oxo-tetronate to 3-oxo-tetronate 4-phosphate. The protein is 3-oxo-tetronate kinase of Salmonella typhimurium (strain LT2 / SGSC1412 / ATCC 700720).